A 428-amino-acid polypeptide reads, in one-letter code: UDP-N-acetylglucosamine 1-carboxyvinyltransferase (428 aa).

Residue 25 to 26 coordinates phosphoenolpyruvate; it reads KN. Arginine 102 contributes to the UDP-N-acetyl-alpha-D-glucosamine binding site. The active-site Proton donor is cysteine 126. The residue at position 126 (cysteine 126) is a 2-(S-cysteinyl)pyruvic acid O-phosphothioketal. Positions 316 and 338 each coordinate UDP-N-acetyl-alpha-D-glucosamine.

Belongs to the EPSP synthase family. MurA subfamily.

It is found in the cytoplasm. It carries out the reaction phosphoenolpyruvate + UDP-N-acetyl-alpha-D-glucosamine = UDP-N-acetyl-3-O-(1-carboxyvinyl)-alpha-D-glucosamine + phosphate. It participates in cell wall biogenesis; peptidoglycan biosynthesis. In terms of biological role, cell wall formation. Adds enolpyruvyl to UDP-N-acetylglucosamine. In Anaplasma marginale (strain St. Maries), this protein is UDP-N-acetylglucosamine 1-carboxyvinyltransferase.